Reading from the N-terminus, the 349-residue chain is tRNA pseudouridine synthase D (349 aa).

Phe27 contributes to the substrate binding site. Asp80 acts as the Nucleophile in catalysis. Asn129 lines the substrate pocket. The 149-residue stretch at 155 to 303 (GVPNYFGAQR…VEAARRAMLL (149 aa)) folds into the TRUD domain. A substrate-binding site is contributed by Phe329.

This sequence belongs to the pseudouridine synthase TruD family.

The catalysed reaction is uridine(13) in tRNA = pseudouridine(13) in tRNA. Responsible for synthesis of pseudouridine from uracil-13 in transfer RNAs. This chain is tRNA pseudouridine synthase D, found in Escherichia coli (strain SMS-3-5 / SECEC).